The chain runs to 261 residues: Enolase-phosphatase E1 (261 aa).

Residues D16 and E18 each contribute to the Mg(2+) site. Substrate-binding positions include 153 to 154 (SS) and K187. Position 212 (D212) interacts with Mg(2+).

The protein belongs to the HAD-like hydrolase superfamily. MasA/MtnC family. Monomer. Mg(2+) serves as cofactor.

Its subcellular location is the cytoplasm. It localises to the nucleus. It carries out the reaction 5-methylsulfanyl-2,3-dioxopentyl phosphate + H2O = 1,2-dihydroxy-5-(methylsulfanyl)pent-1-en-3-one + phosphate. Its pathway is amino-acid biosynthesis; L-methionine biosynthesis via salvage pathway; L-methionine from S-methyl-5-thio-alpha-D-ribose 1-phosphate: step 3/6. It participates in amino-acid biosynthesis; L-methionine biosynthesis via salvage pathway; L-methionine from S-methyl-5-thio-alpha-D-ribose 1-phosphate: step 4/6. Its function is as follows. Bifunctional enzyme that catalyzes the enolization of 2,3-diketo-5-methylthiopentyl-1-phosphate (DK-MTP-1-P) into the intermediate 2-hydroxy-3-keto-5-methylthiopentenyl-1-phosphate (HK-MTPenyl-1-P), which is then dephosphorylated to form the acireductone 1,2-dihydroxy-3-keto-5-methylthiopentene (DHK-MTPene). The protein is Enolase-phosphatase E1 (enoph1) of Salmo salar (Atlantic salmon).